The primary structure comprises 653 residues: 4-hydroxy-2,2'-bipyrrole-5-methanol synthase PigH (653 aa).

The region spanning 7–84 is the Carrier domain; sequence ETYETLKQSV…DALDGILQRE (78 aa). Residue serine 45 is modified to O-(pantetheine 4'-phosphoryl)serine. 354-355 contacts pyridoxal 5'-phosphate; the sequence is GY. Histidine 379 contributes to the substrate binding site. Pyridoxal 5'-phosphate-binding residues include serine 426, histidine 454, and threonine 482. N6-(pyridoxal phosphate)lysine is present on lysine 485. Residues 512 to 532 form a helical membrane-spanning segment; sequence VFAATIPAPVAAGVIASIDVM.

It depends on pyridoxal 5'-phosphate as a cofactor.

It localises to the membrane. It participates in antibiotic biosynthesis; prodigiosin biosynthesis. Involved in the biosynthesis of 4-methoxy-2,2'-bipyrrole-5-carbaldehyde (MBC), one of the terminal products involved in the biosynthesis of the red antibiotic prodigiosin (Pig). Carrier of the L-malonyl group (malonyl-S-PigH), which is decarboxylated by PigJ to yield a C2 carbanion acetyl-S-PigH. Then the pyrrolyl group of pyrrolyl-S-cysteinyl PigJ intermediate is captured by the C2 carbanion acetyl-S-PigH to yield the pyrrolyl-beta-ketoacyl-S-PigH. In the last step, PigH catalyzes the decarboxylative condensation between the pyrrolyl-beta-ketoacyl (pyrrolyl-beta-ketoacyl-S-PigH) and L-serine to yield 4-hydroxy-2,2'-bipyrrole-5-methanol (HBM). This Serratia sp. (strain ATCC 39006) (Prodigiosinella confusarubida) protein is 4-hydroxy-2,2'-bipyrrole-5-methanol synthase PigH.